A 392-amino-acid polypeptide reads, in one-letter code: MILTRCLPLIWLSLLTVCAAGRTLHPLPVKGPKTVKLQLQTSRPYNIAHRGSNGEIPEETTAAYLKAIEEGTDFIETDILSSKDGVLICFHDCILDETTNVASHKEFADRKRTYDVQGFNITGFFTFDFTLKELKQLRIKQRYAFRDQQYNGMYPIITFEEFLTIARDAPRVVGIYPEIKNPVLMNQHVKWPGGKKFEDKVVETLKKYGYGGSYLSKKWLKKPLFIQSFAPTSLVYISNLTDSPKVLLIDDVTMPTQDTNQTYAEITSDAYFEYIKQYVVGIGPWKDTIVPVNNNYVLAPTDLVKRAHAHNLQVHPYTYRNEHEFLHYNFSQDPYKEYDYWINEIGVDGLFTDFTGSLHNFQEWTSPLPDTSKSPRQLLSQIASLVLPYAKA.

The first 21 residues, 1–21 (MILTRCLPLIWLSLLTVCAAG), serve as a signal peptide directing secretion. The GP-PDE domain maps to 44 to 362 (PYNIAHRGSN…DFTGSLHNFQ (319 aa)). N120, N239, N260, and N329 each carry an N-linked (GlcNAc...) asparagine glycan.

This sequence belongs to the glycerophosphoryl diester phosphodiesterase family. As to expression, expressed in roots, rosette and cauline leaves, stems, flowers and siliques.

The protein resides in the secreted. Its subcellular location is the cell wall. It localises to the vacuole. It catalyses the reaction a sn-glycero-3-phosphodiester + H2O = an alcohol + sn-glycerol 3-phosphate + H(+). This is Glycerophosphodiester phosphodiesterase GDPD5 from Arabidopsis thaliana (Mouse-ear cress).